The following is a 227-amino-acid chain: Ribose-5-phosphate isomerase A (227 aa).

Substrate contacts are provided by residues 30-33 (TGST), 86-89 (DGAD), and 99-104 (KGMGGA). E108 functions as the Proton acceptor in the catalytic mechanism. K126 contributes to the substrate binding site.

This sequence belongs to the ribose 5-phosphate isomerase family. In terms of assembly, homodimer.

The enzyme catalyses aldehydo-D-ribose 5-phosphate = D-ribulose 5-phosphate. Its pathway is carbohydrate degradation; pentose phosphate pathway; D-ribose 5-phosphate from D-ribulose 5-phosphate (non-oxidative stage): step 1/1. Its function is as follows. Involved in the first step of the non-oxidative branch of the pentose phosphate pathway. It catalyzes the reversible conversion of ribose-5-phosphate to ribulose 5-phosphate. Can also act on D-ribose-5-diphosphate and D-ribose-5-triphosphate as substrate. The protein is Ribose-5-phosphate isomerase A of Thermus thermophilus (strain ATCC BAA-163 / DSM 7039 / HB27).